The chain runs to 513 residues: L-threonine dehydratase biosynthetic IlvA (513 aa).

Position 63 is an N6-(pyridoxal phosphate)lysine (lysine 63). Pyridoxal 5'-phosphate contacts are provided by residues asparagine 90, 189 to 193 (GGGGL), and serine 316. ACT-like domains lie at 340–411 (ALLA…DMSD) and 433–504 (RLYT…DVTK).

It belongs to the serine/threonine dehydratase family. In terms of assembly, homotetramer. It depends on pyridoxal 5'-phosphate as a cofactor.

The enzyme catalyses L-threonine = 2-oxobutanoate + NH4(+). Its pathway is amino-acid biosynthesis; L-isoleucine biosynthesis; 2-oxobutanoate from L-threonine: step 1/1. Catalyzes the anaerobic formation of alpha-ketobutyrate and ammonia from threonine in a two-step reaction. The first step involved a dehydration of threonine and a production of enamine intermediates (aminocrotonate), which tautomerizes to its imine form (iminobutyrate). Both intermediates are unstable and short-lived. The second step is the nonenzymatic hydrolysis of the enamine/imine intermediates to form 2-ketobutyrate and free ammonia. In the low water environment of the cell, the second step is accelerated by RidA. This Haemophilus influenzae (strain ATCC 51907 / DSM 11121 / KW20 / Rd) protein is L-threonine dehydratase biosynthetic IlvA (ilvA).